The sequence spans 1358 residues: Phosphoinositide 3-kinase regulatory subunit 4 (1358 aa).

Residue Gly2 is the site of N-myristoyl glycine attachment. A Protein kinase domain is found at 26 to 324; the sequence is FEYDKSLGST…AFPEIFYTFL (299 aa). ATP-binding positions include 32 to 40 and Lys53; that span reads LGSTRFFKV. Catalysis depends on Asp148, which acts as the Proton acceptor. HEAT repeat units follow at residues 373–411, 413–450, 458–495, 531–570, 572–610, 612–648, and 690–726; these read NGLV…RLGV, ILLD…LVKE, IYPE…TALR, QALH…FFGR, KAND…YVGW, SSSI…LGLL, and DVYC…PVSR. 4 positions are modified to phosphoserine: Ser808, Ser813, Ser853, and Ser865. Positions 875 to 899 are disordered; the sequence is LPKGSDQEVIQTGKPPRSESSAGIC. WD repeat units lie at residues 991-1030, 1040-1079, 1093-1134, 1139-1178, 1182-1223, and 1237-1278; these read EHKS…GKTT, RVGG…LPKS, KEDG…NAWT, LKSG…PISS, PSRA…RRFT, and PSPH…RSYV. The segment at 1307 to 1326 is disordered; that stretch reads KQKVGPSDDTPRRGPESLPV. Residues 1315–1326 are compositionally biased toward basic and acidic residues; that stretch reads DTPRRGPESLPV. Thr1316 bears the Phosphothreonine mark. A WD 7 repeat occupies 1327–1358; sequence GHHDIITDVATFQTTQGFIVTASRDGIVKVWK.

This sequence belongs to the protein kinase superfamily. Ser/Thr protein kinase family. In terms of assembly, component of the PI3K (PI3KC3/PI3K-III/class III phosphatidylinositol 3-kinase) complex the core of which is composed of the catalytic subunit PIK3C3, the regulatory subunit PIK3R4 and BECN1 associating with additional regulatory/auxiliary subunits to form alternative complex forms. Alternative complex forms containing a fourth regulatory subunit in a mutually exclusive manner are PI3K complex I (PI3KC3-C1) containing ATG14, and PI3K complex II (PI3KC3-C2) containing UVRAG. PI3KC3-C1 displays a V-shaped architecture with PIK3R4 serving as a bridge between PIK3C3 and the ATG14:BECN1 subcomplex. Both, PI3KC3-C1 and PI3KC3-C2, can associate with further regulatory subunits, such as RUBCN, SH3GLB1/Bif-1, AMBRA1 and NRBF2. PI3KC3-C1 probably associates with PIK3CB. Interacts with RAB7A in the presence of PIK3C3/VPS34. Interacts with NRBF2. Interacts with ARMC3. The cofactor is Mn(2+). Post-translationally, myristoylated. Probably autophosphorylated.

Its subcellular location is the late endosome. It localises to the cytoplasmic vesicle. The protein localises to the autophagosome. It is found in the membrane. It carries out the reaction L-seryl-[protein] + ATP = O-phospho-L-seryl-[protein] + ADP + H(+). The catalysed reaction is L-threonyl-[protein] + ATP = O-phospho-L-threonyl-[protein] + ADP + H(+). In terms of biological role, regulatory subunit of the PI3K complex that mediates formation of phosphatidylinositol 3-phosphate; different complex forms are believed to play a role in multiple membrane trafficking pathways: PI3KC3-C1 is involved in initiation of autophagosomes and PI3KC3-C2 in maturation of autophagosomes and endocytosis. Involved in regulation of degradative endocytic trafficking and cytokinesis, probably in the context of PI3KC3-C2. Functionally, regulatory subunit of the PI3K complex. May regulate membrane trafficking late in the endocytic pathway. The protein is Phosphoinositide 3-kinase regulatory subunit 4 (PIK3R4) of Pongo abelii (Sumatran orangutan).